Reading from the N-terminus, the 353-residue chain is Biotin synthase (353 aa).

The segment covering 1–22 (MTACSTTPTTSATSAQPAAGSP) has biased composition (low complexity). Residues 1 to 30 (MTACSTTPTTSATSAQPAAGSPLQWHARPS) form a disordered region. In terms of domain architecture, Radical SAM core spans 72–299 (GDIELATLLS…TARVRLSAGR (228 aa)). C87, C91, and C94 together coordinate [4Fe-4S] cluster. Positions 131, 162, 222, and 294 each coordinate [2Fe-2S] cluster.

Belongs to the radical SAM superfamily. Biotin synthase family. As to quaternary structure, homodimer. The cofactor is [4Fe-4S] cluster. [2Fe-2S] cluster is required as a cofactor.

It catalyses the reaction (4R,5S)-dethiobiotin + (sulfur carrier)-SH + 2 reduced [2Fe-2S]-[ferredoxin] + 2 S-adenosyl-L-methionine = (sulfur carrier)-H + biotin + 2 5'-deoxyadenosine + 2 L-methionine + 2 oxidized [2Fe-2S]-[ferredoxin]. Its pathway is cofactor biosynthesis; biotin biosynthesis; biotin from 7,8-diaminononanoate: step 2/2. In terms of biological role, catalyzes the conversion of dethiobiotin (DTB) to biotin by the insertion of a sulfur atom into dethiobiotin via a radical-based mechanism. This chain is Biotin synthase, found in Delftia acidovorans (strain DSM 14801 / SPH-1).